The chain runs to 162 residues: Disulfide bond formation protein B (162 aa).

The Cytoplasmic segment spans residues 1–4; it reads MRII. A helical membrane pass occupies residues 5–21; that stretch reads FLLIFLACAGLIGYALY. The Periplasmic portion of the chain corresponds to 22–39; sequence LQLMDGLLPCPLCIFQRI. Cys31 and Cys34 are joined by a disulfide. The helical transmembrane segment at 40–56 threads the bilayer; sequence AYWLIGITALFTFIHNP. The Cytoplasmic portion of the chain corresponds to 57–62; sequence QSLGQH. A helical transmembrane segment spans residues 63–80; the sequence is IYYGLIILFSLAGAIVAG. Over 81-136 the chain is Periplasmic; it reads RQAWLIRFPEAFECGISPEEAFLNGLPLAQWWPNMFEANGDCNDGTWQFLSLTLPD. Residues Cys94 and Cys122 are joined by a disulfide bond. The chain crosses the membrane as a helical span at residues 137–155; that stretch reads WSLLIFAAFGIIAGLLWHK. Residues 156–162 are Cytoplasmic-facing; sequence KYNSINQ.

It belongs to the DsbB family.

The protein localises to the cell inner membrane. In terms of biological role, required for disulfide bond formation in some periplasmic proteins. Acts by oxidizing the DsbA protein. This Nitrosomonas eutropha (strain DSM 101675 / C91 / Nm57) protein is Disulfide bond formation protein B.